The sequence spans 521 residues: Probable xyloglucan galactosyltransferase GT14 (521 aa).

Residues 1–30 are Cytoplasmic-facing; the sequence is MRPKNYSQMEKPISITTGKFRTNNNNNHNN. A helical; Signal-anchor for type II membrane protein membrane pass occupies residues 31-51; the sequence is VWFVVPLFFILCFVLLCFDYS. Topologically, residues 52–521 are lumenal; that stretch reads ALFTDTDETA…SPYEEPQVLA (470 aa). Residues 72-92 are disordered; it reads TSSEFTKDDNFSRFPDDPSPD. Over residues 76 to 87 the composition is skewed to basic and acidic residues; the sequence is FTKDDNFSRFPD. N-linked (GlcNAc...) asparagine glycans are attached at residues Asn81, Asn177, Asn203, Asn249, Asn265, and Asn411. The disordered stretch occupies residues 492-521; it reads RQGKDGSDGFDDRDDYKYTFSPYEEPQVLA.

The protein belongs to the glycosyltransferase 47 family. As to expression, expressed in roots, hypocotyls, cotyledons, leaves, stems, stamens and carpels.

The protein resides in the golgi apparatus membrane. In terms of biological role, functions in xyloglucan synthesis by adding side chains to the xylosylated glucan backbone. Involved in the galactosylation of hemicellulose xyloglucan. This is Probable xyloglucan galactosyltransferase GT14 from Arabidopsis thaliana (Mouse-ear cress).